The sequence spans 78 residues: Omega-conotoxin-like 12 (78 aa).

The first 22 residues, 1 to 22 (MKLTCVVIVAVLLLTACQLITA), serve as a signal peptide directing secretion. The propeptide occupies 23–42 (DDSRGTQKHRSLRSTTKVSK). 3 disulfides stabilise this stretch: Cys46-Cys62, Cys53-Cys65, and Cys61-Cys72.

The protein belongs to the conotoxin O1 superfamily. Expressed by the venom duct.

The protein resides in the secreted. Functionally, omega-conotoxins act at presynaptic membranes, they bind and block voltage-gated calcium channels (Cav). The chain is Omega-conotoxin-like 12 from Conus striatus (Striated cone).